A 447-amino-acid polypeptide reads, in one-letter code: Tubulin alpha-2 chain (447 aa).

Residues glutamine 11, glutamate 71, glycine 144, threonine 145, threonine 179, asparagine 206, and asparagine 228 each contribute to the GTP site. Glutamate 71 is a Mg(2+) binding site. The active site involves glutamate 254.

Belongs to the tubulin family. In terms of assembly, dimer of alpha and beta chains. A typical microtubule is a hollow water-filled tube with an outer diameter of 25 nm and an inner diameter of 15 nM. Alpha-beta heterodimers associate head-to-tail to form protofilaments running lengthwise along the microtubule wall with the beta-tubulin subunit facing the microtubule plus end conferring a structural polarity. Microtubules usually have 13 protofilaments but different protofilament numbers can be found in some organisms and specialized cells. Mg(2+) is required as a cofactor. Post-translationally, undergoes a tyrosination/detyrosination cycle, the cyclic removal and re-addition of a C-terminal tyrosine residue by the enzymes tubulin tyrosine carboxypeptidase (TTCP) and tubulin tyrosine ligase (TTL), respectively.

It localises to the cytoplasm. It is found in the cytoskeleton. It catalyses the reaction GTP + H2O = GDP + phosphate + H(+). Its function is as follows. Tubulin is the major constituent of microtubules, a cylinder consisting of laterally associated linear protofilaments composed of alpha- and beta-tubulin heterodimers. Microtubules grow by the addition of GTP-tubulin dimers to the microtubule end, where a stabilizing cap forms. Below the cap, tubulin dimers are in GDP-bound state, owing to GTPase activity of alpha-tubulin. The chain is Tubulin alpha-2 chain (TUBA2) from Eleusine indica (Goosegrass).